The chain runs to 183 residues: Translation initiation factor IF-3 (183 aa).

Belongs to the IF-3 family. As to quaternary structure, monomer.

The protein localises to the cytoplasm. In terms of biological role, IF-3 binds to the 30S ribosomal subunit and shifts the equilibrium between 70S ribosomes and their 50S and 30S subunits in favor of the free subunits, thus enhancing the availability of 30S subunits on which protein synthesis initiation begins. This Pseudomonas syringae pv. tomato (strain ATCC BAA-871 / DC3000) protein is Translation initiation factor IF-3.